We begin with the raw amino-acid sequence, 550 residues long: CTP synthase (550 aa).

The tract at residues M1–L265 is amidoligase domain. S13 contacts CTP. S13 contributes to the UTP binding site. ATP is bound at residue S14–I19. L-glutamine is bound at residue Y54. D71 provides a ligand contact to ATP. Residues D71 and E139 each contribute to the Mg(2+) site. CTP-binding positions include D146–E148, K186–Q191, and K222. UTP contacts are provided by residues K186–Q191 and K222. The 252-residue stretch at T290–R541 folds into the Glutamine amidotransferase type-1 domain. G351 contacts L-glutamine. C378 functions as the Nucleophile; for glutamine hydrolysis in the catalytic mechanism. L-glutamine is bound by residues L379–Q382, E402, and R469. Residues H514 and E516 contribute to the active site.

It belongs to the CTP synthase family. As to quaternary structure, homotetramer.

The catalysed reaction is UTP + L-glutamine + ATP + H2O = CTP + L-glutamate + ADP + phosphate + 2 H(+). It carries out the reaction L-glutamine + H2O = L-glutamate + NH4(+). It catalyses the reaction UTP + NH4(+) + ATP = CTP + ADP + phosphate + 2 H(+). Its pathway is pyrimidine metabolism; CTP biosynthesis via de novo pathway; CTP from UDP: step 2/2. With respect to regulation, allosterically activated by GTP, when glutamine is the substrate; GTP has no effect on the reaction when ammonia is the substrate. The allosteric effector GTP functions by stabilizing the protein conformation that binds the tetrahedral intermediate(s) formed during glutamine hydrolysis. Inhibited by the product CTP, via allosteric rather than competitive inhibition. In terms of biological role, catalyzes the ATP-dependent amination of UTP to CTP with either L-glutamine or ammonia as the source of nitrogen. Regulates intracellular CTP levels through interactions with the four ribonucleotide triphosphates. The protein is CTP synthase of Nitrosococcus oceani (strain ATCC 19707 / BCRC 17464 / JCM 30415 / NCIMB 11848 / C-107).